The sequence spans 475 residues: TOM1-like protein 1 (475 aa).

In terms of domain architecture, VHS spans 22–154 (ATFAGVQTED…DLLKKGVQFP (133 aa)). Residues 155-175 (PLDGEPETKQEAGQISPSRPT) are disordered. Residues 165-175 (EAGQISPSRPT) show a composition bias toward polar residues. Residue serine 170 is modified to Phosphoserine. The 89-residue stretch at 199-287 (EQIGKLHSEL…AILGYERFTR (89 aa)) folds into the GAT domain. The interval 296 to 317 (KRNPTEANQTSSEPSAPSCDLL) is disordered. The span at 300-310 (TEANQTSSEPS) shows a compositional bias: polar residues. Residue serine 313 is modified to Phosphoserine. Positions 392 to 395 (YDNF) are interaction with GRB2. An SH3-binding motif is present at residues 421–425 (LPPLP). The tract at residues 442-445 (YEVM) is interaction with PIK3R1. The residue at position 458 (tyrosine 458) is a Phosphotyrosine. The short motif at 458 to 461 (YEEI) is the SH2-binding element.

This sequence belongs to the TOM1 family. In terms of assembly, interacts with the SH2 and SH3 domains of FYN when phosphorylated. Also interacts with GRB2 and PIK3R1 when phosphorylated. Interacts with LYN. Phosphorylated on tyrosines by FYN and LYN.

It is found in the golgi apparatus. Its subcellular location is the golgi stack. The protein localises to the endosome membrane. It localises to the cytoplasm. The protein resides in the membrane. Probable adapter protein involved in signaling pathways. Interacts with the SH2 and SH3 domains of various signaling proteins when it is phosphorylated. May promote FYN activation, possibly by disrupting intramolecular SH3-dependent interactions. The polypeptide is TOM1-like protein 1 (Tom1l1) (Rattus norvegicus (Rat)).